We begin with the raw amino-acid sequence, 335 residues long: Aspartate carbamoyltransferase catalytic subunit (335 aa).

Arg-54 and Thr-55 together coordinate carbamoyl phosphate. Lys-82 is a binding site for L-aspartate. Arg-104, His-134, and Gln-137 together coordinate carbamoyl phosphate. L-aspartate contacts are provided by Arg-177 and Arg-232. Carbamoyl phosphate is bound by residues Gly-277 and Pro-278.

This sequence belongs to the aspartate/ornithine carbamoyltransferase superfamily. ATCase family. In terms of assembly, heterododecamer (2C3:3R2) of six catalytic PyrB chains organized as two trimers (C3), and six regulatory PyrI chains organized as three dimers (R2).

The enzyme catalyses carbamoyl phosphate + L-aspartate = N-carbamoyl-L-aspartate + phosphate + H(+). Its pathway is pyrimidine metabolism; UMP biosynthesis via de novo pathway; (S)-dihydroorotate from bicarbonate: step 2/3. Functionally, catalyzes the condensation of carbamoyl phosphate and aspartate to form carbamoyl aspartate and inorganic phosphate, the committed step in the de novo pyrimidine nucleotide biosynthesis pathway. This chain is Aspartate carbamoyltransferase catalytic subunit, found in Paenarthrobacter aurescens (strain TC1).